The sequence spans 645 residues: Acetyl-coenzyme A synthetase (645 aa).

Residues 190 to 193, Thr309, and Asn333 contribute to the CoA site; that span reads RGGR. ATP-binding positions include 385–387, 409–414, Asp498, and Arg513; these read GEP and DTWWQT. Ser521 provides a ligand contact to CoA. Residue Arg524 participates in ATP binding. Mg(2+)-binding residues include Val535, His537, and Val540. Position 582 (Arg582) interacts with CoA. Residue Lys607 is modified to N6-acetyllysine.

The protein belongs to the ATP-dependent AMP-binding enzyme family. Requires Mg(2+) as cofactor. Post-translationally, acetylated. Deacetylation by the SIR2-homolog deacetylase activates the enzyme.

It catalyses the reaction acetate + ATP + CoA = acetyl-CoA + AMP + diphosphate. Its function is as follows. Catalyzes the conversion of acetate into acetyl-CoA (AcCoA), an essential intermediate at the junction of anabolic and catabolic pathways. AcsA undergoes a two-step reaction. In the first half reaction, AcsA combines acetate with ATP to form acetyl-adenylate (AcAMP) intermediate. In the second half reaction, it can then transfer the acetyl group from AcAMP to the sulfhydryl group of CoA, forming the product AcCoA. The protein is Acetyl-coenzyme A synthetase of Beijerinckia indica subsp. indica (strain ATCC 9039 / DSM 1715 / NCIMB 8712).